The primary structure comprises 122 residues: Basic phospholipase A2 homolog ecarpholin S (122 aa).

Disulfide bonds link Cys-26–Cys-115, Cys-28–Cys-44, Cys-43–Cys-95, Cys-49–Cys-122, Cys-50–Cys-88, Cys-57–Cys-81, and Cys-75–Cys-86. Positions 105-117 are important for membrane-damaging activities in eukaryotes and bacteria; heparin-binding; sequence KKYTYYPNFWCKG.

In terms of tissue distribution, expressed by the venom gland.

The protein localises to the secreted. Its activity is regulated as follows. Suramin inhibits the myotoxic activity. Functionally, snake venom phospholipase A2 homolog that lacks enzymatic activity. Shows high myotoxin activities and displays edema-inducing activities. The protein is Basic phospholipase A2 homolog ecarpholin S of Echis carinatus (Saw-scaled viper).